The following is a 147-amino-acid chain: Deoxyuridine 5'-triphosphate nucleotidohydrolase (147 aa).

Mg(2+) is bound at residue arginine 24. Residues 68-70 (PRS), 82-85 (GVID), tyrosine 88, glycine 93, isoleucine 95, and arginine 111 each bind dUTP.

Belongs to the dUTPase family. Requires Mg(2+) as cofactor.

It carries out the reaction dUTP + H2O = dUMP + diphosphate + H(+). Functionally, this enzyme is involved in nucleotide metabolism: it produces dUMP, the immediate precursor of thymidine nucleotides and it decreases the intracellular concentration of dUTP so that uracil cannot be incorporated into DNA. The protein is Deoxyuridine 5'-triphosphate nucleotidohydrolase (OPG046) of Oryctolagus cuniculus (Rabbit).